A 299-amino-acid chain; its full sequence is Protoheme IX farnesyltransferase 1 (299 aa).

The next 9 helical transmembrane spans lie at V25 to V45, W47 to V67, L95 to F115, L119 to L139, I147 to G167, P173 to I193, A217 to I237, L243 to Y263, and I279 to L299.

Belongs to the UbiA prenyltransferase family. Protoheme IX farnesyltransferase subfamily.

It localises to the cell inner membrane. The enzyme catalyses heme b + (2E,6E)-farnesyl diphosphate + H2O = Fe(II)-heme o + diphosphate. It functions in the pathway porphyrin-containing compound metabolism; heme O biosynthesis; heme O from protoheme: step 1/1. In terms of biological role, converts heme B (protoheme IX) to heme O by substitution of the vinyl group on carbon 2 of heme B porphyrin ring with a hydroxyethyl farnesyl side group. The protein is Protoheme IX farnesyltransferase 1 of Pseudomonas entomophila (strain L48).